Here is a 280-residue protein sequence, read N- to C-terminus: MTNIHPTAIVEDGARIGNNVTIEPYAIVKKSVTLCDDVVVKSYAYIDGFTTIGRGTTVWPSAMIGNKPQDLKFKGEKTFVEIGEHCEIREFAMITSSTFEGTTVSIGNNCLIMPWAHIAHNCSVGNNVVFSTHVQLAGHVQVGDCVTIGSMVGVHQFVRIGSYSMVGAMSGIRRDIPPFTIGTGNPYALGGINKVGLQRRQVSFETRLALIKTFKRVFRSDESFQASLESVLEDFGEVPEVRHFVEFCRQPSKRGIERGVDCEASLEEPIDKKEGAFVES.

This sequence belongs to the transferase hexapeptide repeat family. LpxA subfamily. In terms of assembly, homotrimer.

It localises to the cytoplasm. The enzyme catalyses a (3R)-hydroxyacyl-[ACP] + UDP-N-acetyl-alpha-D-glucosamine = a UDP-3-O-[(3R)-3-hydroxyacyl]-N-acetyl-alpha-D-glucosamine + holo-[ACP]. It participates in glycolipid biosynthesis; lipid IV(A) biosynthesis; lipid IV(A) from (3R)-3-hydroxytetradecanoyl-[acyl-carrier-protein] and UDP-N-acetyl-alpha-D-glucosamine: step 1/6. In terms of biological role, involved in the biosynthesis of lipid A, a phosphorylated glycolipid that anchors the lipopolysaccharide to the outer membrane of the cell. This is Acyl-[acyl-carrier-protein]--UDP-N-acetylglucosamine O-acyltransferase from Chlamydia trachomatis serovar L2 (strain ATCC VR-902B / DSM 19102 / 434/Bu).